A 108-amino-acid chain; its full sequence is Transcriptional activator HlyU (108 aa).

An HTH arsR-type domain is found at 13-107; sequence EMEKNSAKAV…LLHRLYCQAN (95 aa). The H-T-H motif DNA-binding region spans 47 to 66; the sequence is VGELSSRLELSQSALSQHLA.

Its function is as follows. Up-regulates the expression of the hemolysin gene, hlyA, and may promote expression of other virulence determinants in vivo. It may have both positive and negative regulator activities. This is Transcriptional activator HlyU (hlyU) from Vibrio cholerae serotype O1 (strain ATCC 39315 / El Tor Inaba N16961).